Reading from the N-terminus, the 138-residue chain is Acidic phospholipase A2 AplTX-I (138 aa).

Positions 1-16 (MRTLWIMAVLLLGVEG) are cleaved as a signal peptide. 7 disulfide bridges follow: cysteine 42–cysteine 131, cysteine 44–cysteine 60, cysteine 59–cysteine 111, cysteine 65–cysteine 138, cysteine 66–cysteine 104, cysteine 73–cysteine 97, and cysteine 91–cysteine 102. Tyrosine 43, glycine 45, and glycine 47 together coordinate Ca(2+). Histidine 63 is a catalytic residue. Aspartate 64 is a Ca(2+) binding site. Residue aspartate 105 is part of the active site.

In terms of assembly, monomer. Ca(2+) is required as a cofactor. Expressed by the venom gland.

Its subcellular location is the secreted. The enzyme catalyses a 1,2-diacyl-sn-glycero-3-phosphocholine + H2O = a 1-acyl-sn-glycero-3-phosphocholine + a fatty acid + H(+). With respect to regulation, inhibited by divalent cations different from calcium ions (cadmium, magnesium, manganese, zinc), since they act as competitive antagonists of this cofactor. Its function is as follows. Snake venom phospholipase A2 (PLA2) that triggers a high neuromuscular toxicity in chick biventer cervicis preparations, but not in mouse phrenic nerve-diaphragm (PND) preparations, suggesting a selective neurotoxin activity towards birds. Does not induce myotoxic, coagulant, anticoagulant, edema, and antibacterial activities. PLA2 catalyzes the calcium-dependent hydrolysis of the 2-acyl groups in 3-sn-phosphoglycerides. The chain is Acidic phospholipase A2 AplTX-I from Agkistrodon piscivorus leucostoma (Western cottonmouth).